We begin with the raw amino-acid sequence, 220 residues long: Urease accessory protein UreF (220 aa).

Belongs to the UreF family. In terms of assembly, ureD, UreF and UreG form a complex that acts as a GTP-hydrolysis-dependent molecular chaperone, activating the urease apoprotein by helping to assemble the nickel containing metallocenter of UreC. The UreE protein probably delivers the nickel.

Its subcellular location is the cytoplasm. In terms of biological role, required for maturation of urease via the functional incorporation of the urease nickel metallocenter. The chain is Urease accessory protein UreF from Jannaschia sp. (strain CCS1).